Here is a 1067-residue protein sequence, read N- to C-terminus: Ubiquitin carboxyl-terminal hydrolase 26 (1067 aa).

The segment covering 1 to 12 (MSRPNTRNKNKR) has biased composition (basic residues). The tract at residues 1–22 (MSRPNTRNKNKRQRPDAVDSSS) is disordered. The USP domain maps to 106–442 (AGLTNLGATC…DAYMLMYSLR (337 aa)). Cys115 serves as the catalytic Nucleophile. The active-site Proton acceptor is the His359. Residues 385–418 (KRPCNEASSSTPQSESNGTASSGNITDGIQSGSS) form a disordered region. Polar residues predominate over residues 390-418 (EASSSTPQSESNGTASSGNITDGIQSGSS). 3 consecutive DUSP domains span residues 503 to 595 (NALT…GDYC), 610 to 711 (DSYR…DCTC), and 738 to 861 (TLKV…SAFI). Positions 948–1031 (FEVDRRTSKR…LWVRDTEMHE (84 aa)) constitute a Ubiquitin-like domain.

It belongs to the peptidase C19 family. Expressed in seedlings, roots, stems, leaves and inflorescences.

The protein localises to the nucleus. It catalyses the reaction Thiol-dependent hydrolysis of ester, thioester, amide, peptide and isopeptide bonds formed by the C-terminal Gly of ubiquitin (a 76-residue protein attached to proteins as an intracellular targeting signal).. In terms of biological role, recognizes and hydrolyzes the peptide bond at the C-terminal Gly of ubiquitin. Involved in the processing of poly-ubiquitin precursors as well as that of ubiquitinated proteins. Deubiquitinates H2BK143ub1 of histone H2B. This chain is Ubiquitin carboxyl-terminal hydrolase 26 (UBP26), found in Arabidopsis thaliana (Mouse-ear cress).